The following is a 78-amino-acid chain: Large ribosomal subunit protein bL28 (78 aa).

The tract at residues 1 to 30 (MAAHCQVTGAGPGFGHSISHSHRRTKRRFD) is disordered.

Belongs to the bacterial ribosomal protein bL28 family.

The polypeptide is Large ribosomal subunit protein bL28 (Micrococcus luteus (strain ATCC 4698 / DSM 20030 / JCM 1464 / CCM 169 / CCUG 5858 / IAM 1056 / NBRC 3333 / NCIMB 9278 / NCTC 2665 / VKM Ac-2230) (Micrococcus lysodeikticus)).